Reading from the N-terminus, the 293-residue chain is Pyridoxal 5'-phosphate synthase subunit PdxS (293 aa).

Asp-23 is a binding site for D-ribose 5-phosphate. The Schiff-base intermediate with D-ribose 5-phosphate role is filled by Lys-80. Gly-152 is a D-ribose 5-phosphate binding site. Arg-164 is a binding site for D-glyceraldehyde 3-phosphate. Residues Gly-213 and 234–235 (GS) each bind D-ribose 5-phosphate.

It belongs to the PdxS/SNZ family. In the presence of PdxT, forms a dodecamer of heterodimers.

It carries out the reaction aldehydo-D-ribose 5-phosphate + D-glyceraldehyde 3-phosphate + L-glutamine = pyridoxal 5'-phosphate + L-glutamate + phosphate + 3 H2O + H(+). It participates in cofactor biosynthesis; pyridoxal 5'-phosphate biosynthesis. In terms of biological role, catalyzes the formation of pyridoxal 5'-phosphate from ribose 5-phosphate (RBP), glyceraldehyde 3-phosphate (G3P) and ammonia. The ammonia is provided by the PdxT subunit. Can also use ribulose 5-phosphate and dihydroxyacetone phosphate as substrates, resulting from enzyme-catalyzed isomerization of RBP and G3P, respectively. This Syntrophus aciditrophicus (strain SB) protein is Pyridoxal 5'-phosphate synthase subunit PdxS.